The sequence spans 430 residues: Phosphoribosylamine--glycine ligase (430 aa).

Residues 109–314 (RGLMNKYGID…FLTIAEHIIN (206 aa)) enclose the ATP-grasp domain. 136-192 (IREYPGDLAVKPTGLTGGKGVKVMGEQVDREGAVEYAMTLKDQVIILEERLLGEEFT) is an ATP binding site. Residues Q272, E284, and N286 each coordinate Mg(2+). Residues Q272, E284, and N286 each contribute to the Mn(2+) site.

It belongs to the GARS family. It depends on Mg(2+) as a cofactor. Mn(2+) serves as cofactor.

It catalyses the reaction 5-phospho-beta-D-ribosylamine + glycine + ATP = N(1)-(5-phospho-beta-D-ribosyl)glycinamide + ADP + phosphate + H(+). Its pathway is purine metabolism; IMP biosynthesis via de novo pathway; N(1)-(5-phospho-D-ribosyl)glycinamide from 5-phospho-alpha-D-ribose 1-diphosphate: step 2/2. This Methanocorpusculum labreanum (strain ATCC 43576 / DSM 4855 / Z) protein is Phosphoribosylamine--glycine ligase.